The following is a 136-amino-acid chain: Type II nicking enzyme V.XorIIP (136 aa).

It belongs to the Vsr family.

In terms of biological role, may nick XorII sequences that contain T/G mispairs resulting from m5C-deamination. If unrepaired, these mismatches can lead to C-to-T transition mutations. The very short patch (VSP) repair process counteracts the mutagenic process by repairing the mismatches in favor of the G-containing strand. This enzyme is an endonuclease that nicks double-stranded DNA within the sequence CGATCG (C-methylation site unknown) next to the thymidine residue that is mismatched to 2'-deoxyguanosine. The incision is mismatch-dependent and strand-specific. The protein is Type II nicking enzyme V.XorIIP of Xanthomonas oryzae pv. oryzae (strain KACC10331 / KXO85).